The following is a 485-amino-acid chain: Delta(14)-sterol reductase (485 aa).

5 helical membrane passes run 18-38, 77-97, 131-151, 155-175, and 319-339; these read FFGPPGAFAISFLLPVLVYVF, GLVSWEASAATAGYILLSLIL, LAILAAGTAAQGAEFPVWTFI, FIQILTANTIFSYAVATFVYV, and SLGPVGLAVMLSLIGLGFYIF. NADP(+) is bound by residues Lys346, Arg350, Leu373, Trp378, and 385–386; that span reads NY. Residues 431 to 451 form a helical membrane-spanning segment; it reads AKGWGMLITYFYILYFAILLI. Residues Asp457, 461–465, and Tyr472 each bind NADP(+); that span reads CHRKY.

This sequence belongs to the ERG4/ERG24 family.

It is found in the membrane. It catalyses the reaction 4,4-dimethyl-5alpha-cholesta-8,24-dien-3beta-ol + NADP(+) = 4,4-dimethyl-5alpha-cholesta-8,14,24-trien-3beta-ol + NADPH + H(+). It functions in the pathway steroid biosynthesis; zymosterol biosynthesis; zymosterol from lanosterol: step 2/6. Reduces the C14=C15 double bond of 4,4-dimethyl-cholesta-8,14,24-trienol to produce 4,4-dimethyl-cholesta-8,24-dienol. The polypeptide is Delta(14)-sterol reductase (Fusarium vanettenii (Neocosmospora pisi)).